Consider the following 131-residue polypeptide: Large ribosomal subunit protein bL12 (131 aa).

This sequence belongs to the bacterial ribosomal protein bL12 family. Homodimer. Part of the ribosomal stalk of the 50S ribosomal subunit. Forms a multimeric L10(L12)X complex, where L10 forms an elongated spine to which 2 to 4 L12 dimers bind in a sequential fashion. Binds GTP-bound translation factors.

Forms part of the ribosomal stalk which helps the ribosome interact with GTP-bound translation factors. Is thus essential for accurate translation. This Prochlorococcus marinus (strain MIT 9215) protein is Large ribosomal subunit protein bL12.